The sequence spans 220 residues: Fructose-6-phosphate aldolase (220 aa).

Lys-85 functions as the Schiff-base intermediate with substrate in the catalytic mechanism.

This sequence belongs to the transaldolase family. Type 3A subfamily. Homodecamer.

It is found in the cytoplasm. The enzyme catalyses beta-D-fructose 6-phosphate = dihydroxyacetone + D-glyceraldehyde 3-phosphate. Functionally, catalyzes the reversible formation of fructose 6-phosphate from dihydroxyacetone and D-glyceraldehyde 3-phosphate via an aldolization reaction. The protein is Fructose-6-phosphate aldolase of Salmonella gallinarum (strain 287/91 / NCTC 13346).